Reading from the N-terminus, the 213-residue chain is CDP-diacylglycerol--inositol 3-phosphatidyltransferase (213 aa).

Residues 1–5 are Cytoplasmic-facing; it reads MPDEN. Residues 6–26 form a helical membrane-spanning segment; it reads IFLFVPNLIGYARIVFAIISF. A topological domain (lumenal) is located at residue Tyr-27. The chain crosses the membrane as a helical span at residues 28-48; sequence FMPCCPLTASSFYLLSGLLDA. The Mg(2+) site is built by Asp-47 and Asp-50. The Cytoplasmic portion of the chain corresponds to 49–73; sequence FDGHAARALNQGTRFGAMLDMLTDR. A CDP-1,2-diacyl-sn-glycerol-binding residues include Gly-51, Arg-55, and Thr-61. Mg(2+) is bound by residues Asp-68 and Asp-72. Asp-72 serves as the catalytic Proton acceptor. Residues 74-94 traverse the membrane as a helical segment; sequence CSTMCLLVNLALLYPGATLFF. A topological domain (lumenal) is located at residue Gln-95. The helical transmembrane segment at 96-116 threads the bilayer; the sequence is ISMSLDVASHWLHLHSSVVRG. The Cytoplasmic segment spans residues 117–139; that stretch reads SESHKMIDLSGNPVLRIYYTSRP. The chain crosses the membrane as a helical span at residues 140-160; that stretch reads ALFTLCAGNELFYCLLYLFHF. Topologically, residues 161-174 are lumenal; it reads SEGPLVGSVGLFRM. Residues 175–195 form a helical membrane-spanning segment; sequence GLWVTAPIALLKSLISVIHLI. The Cytoplasmic portion of the chain corresponds to 196 to 213; it reads TAARNMAALDAADRAKKK.

The protein belongs to the CDP-alcohol phosphatidyltransferase class-I family. Requires Mn(2+) as cofactor. It depends on Mg(2+) as a cofactor. Detected in placenta (at protein level). Widely expressed. Higher expression in adult liver and skeletal muscle, slightly lower levels seen in pancreas, kidney, lung, placenta, brain, heart, leukocyte, colon, small intestine, ovary, testis, prostate, thymus and spleen. In fetus, expressed in kidney, liver, lung and brain.

It is found in the endoplasmic reticulum membrane. It localises to the cell membrane. The catalysed reaction is a CDP-1,2-diacyl-sn-glycerol + myo-inositol = a 1,2-diacyl-sn-glycero-3-phospho-(1D-myo-inositol) + CMP + H(+). Inhibited by PtdIns (product inhibition), phosphatidylinositol phosphate, and nucleoside di- and tri-phosphates. Catalyzes the biosynthesis of phosphatidylinositol (PtdIns) as well as PtdIns:inositol exchange reaction. May thus act to reduce an excessive cellular PtdIns content. The exchange activity is due to the reverse reaction of PtdIns synthase and is dependent on CMP, which is tightly bound to the enzyme. This is CDP-diacylglycerol--inositol 3-phosphatidyltransferase from Homo sapiens (Human).